Reading from the N-terminus, the 671-residue chain is UvrABC system protein C (671 aa).

The disordered stretch occupies residues 1–20 (MPHLPDSMSPEAPAGPAPAT). Positions 10 to 20 (PEAPAGPAPAT) are enriched in low complexity. Residues 37–115 (PLPGVYRYFD…IKTLNPKYNI (79 aa)) form the GIY-YIG domain. The UVR domain maps to 232–267 (RQVMEALEARMMAHAEKLEFEQAAELRNQVAALSNV).

This sequence belongs to the UvrC family. Interacts with UvrB in an incision complex.

It is found in the cytoplasm. The UvrABC repair system catalyzes the recognition and processing of DNA lesions. UvrC both incises the 5' and 3' sides of the lesion. The N-terminal half is responsible for the 3' incision and the C-terminal half is responsible for the 5' incision. The protein is UvrABC system protein C of Albidiferax ferrireducens (strain ATCC BAA-621 / DSM 15236 / T118) (Rhodoferax ferrireducens).